The sequence spans 486 residues: Glutamyl-tRNA(Gln) amidotransferase subunit A (486 aa).

Residues lysine 74 and serine 149 each act as charge relay system in the active site. Serine 173 serves as the catalytic Acyl-ester intermediate.

This sequence belongs to the amidase family. GatA subfamily. In terms of assembly, heterotrimer of A, B and C subunits.

It carries out the reaction L-glutamyl-tRNA(Gln) + L-glutamine + ATP + H2O = L-glutaminyl-tRNA(Gln) + L-glutamate + ADP + phosphate + H(+). Functionally, allows the formation of correctly charged Gln-tRNA(Gln) through the transamidation of misacylated Glu-tRNA(Gln) in organisms which lack glutaminyl-tRNA synthetase. The reaction takes place in the presence of glutamine and ATP through an activated gamma-phospho-Glu-tRNA(Gln). The sequence is that of Glutamyl-tRNA(Gln) amidotransferase subunit A from Prochlorococcus marinus (strain MIT 9303).